The primary structure comprises 596 residues: Fructan 1-exohydrolase (596 aa).

Residues 1–20 (MAQAWAFLLPVLVLGSYVTS) form the signal peptide. Aspartate 75 is a catalytic residue. Residues asparagine 168, asparagine 236, and asparagine 248 are each glycosylated (N-linked (GlcNAc...) asparagine). Cysteine 446 and cysteine 492 are disulfide-bonded. The N-linked (GlcNAc...) asparagine glycan is linked to asparagine 567.

The protein belongs to the glycosyl hydrolase 32 family.

It catalyses the reaction Hydrolysis of terminal, non-reducing (2-&gt;1)-linked beta-D-fructofuranose residues in fructans.. Its activity is regulated as follows. Inhibited by sucrose. In terms of biological role, hydrolyzes inulin-type beta-(2,1)-fructans. May play a role as a beta-(2,1)-trimmer during graminan biosynthesis. This is Fructan 1-exohydrolase from Aegilops tauschii (Tausch's goatgrass).